A 131-amino-acid chain; its full sequence is Profilin-8 (131 aa).

Residues cysteine 13 and cysteine 115 are joined by a disulfide bond. Residues 81–97 (AVIRGKKGAGGITIKKT) carry the Involved in PIP2 interaction motif. Threonine 111 bears the Phosphothreonine mark.

Belongs to the profilin family. Occurs in many kinds of cells as a complex with monomeric actin in a 1:1 ratio. In terms of processing, phosphorylated by MAP kinases.

The protein localises to the cytoplasm. The protein resides in the cytoskeleton. Its function is as follows. Binds to actin and affects the structure of the cytoskeleton. At high concentrations, profilin prevents the polymerization of actin, whereas it enhances it at low concentrations. This chain is Profilin-8, found in Olea europaea (Common olive).